We begin with the raw amino-acid sequence, 449 residues long: Omega-amino acid--pyruvate aminotransferase (449 aa).

Trp60 is a substrate binding site. 119–120 (GS) contributes to the pyridoxal 5'-phosphate binding site. Position 288 is an N6-(pyridoxal phosphate)lysine (Lys288). Thr327 serves as a coordination point for pyridoxal 5'-phosphate. The substrate site is built by Arg414 and Gln421.

It belongs to the class-III pyridoxal-phosphate-dependent aminotransferase family. Homotetramer. It depends on pyridoxal 5'-phosphate as a cofactor.

The enzyme catalyses 3-oxopropanoate + L-alanine = beta-alanine + pyruvate. In terms of biological role, catalyzes transamination between a variety of omega-amino acids, mono and diamines, and pyruvate. Plays a pivotal role in the metabolism of the omega amino acids. This chain is Omega-amino acid--pyruvate aminotransferase, found in Pseudomonas putida (Arthrobacter siderocapsulatus).